Reading from the N-terminus, the 63-residue chain is DNA-directed RNA polymerase 7 kDa subunit (63 aa).

The protein belongs to the poxviridae DNA-directed RNA polymerase 7 kDa subunit family. In terms of assembly, the DNA-dependent RNA polymerase used for intermediate and late genes expression consists of eight subunits 147 kDa, 133 kDa, 35 kDa, 30 kDa, 22 kDa, 19 kDa, 18 kDa and 7 kDa totalling more than 500 kDa in mass. The same holoenzyme, with the addition of the transcription-specificity factor RAP94, is used for early gene expression.

It is found in the virion. The catalysed reaction is RNA(n) + a ribonucleoside 5'-triphosphate = RNA(n+1) + diphosphate. Part of the DNA-dependent RNA polymerase which catalyzes the transcription of viral DNA into RNA using the four ribonucleoside triphosphates as substrates. Responsible for the transcription of early, intermediate and late genes. DNA-dependent RNA polymerase associates with the early transcription factor (ETF) thereby allowing the early genes transcription. Late transcription, and probably also intermediate transcription, require newly synthesized RNA polymerase. The sequence is that of DNA-directed RNA polymerase 7 kDa subunit (RPO7) from Myxoma virus (strain Lausanne) (MYXV).